Consider the following 311-residue polypeptide: uncharacterized protein (311 aa).

Residues 1–13 (MLLSLIFPIAVLG) form the signal peptide. The N-linked (GlcNAc...) asparagine glycan is linked to asparagine 115.

Its subcellular location is the secreted. This is an uncharacterized protein from Encephalitozoon cuniculi (strain GB-M1) (Microsporidian parasite).